A 102-amino-acid chain; its full sequence is uncharacterized protein (102 aa).

The chain crosses the membrane as a helical span at residues 27-47; it reads TISLVSAGLLEEIFLLFGLTF.

It localises to the membrane. This is an uncharacterized protein from Saccharomyces cerevisiae (strain ATCC 204508 / S288c) (Baker's yeast).